Here is a 257-residue protein sequence, read N- to C-terminus: Imidazole glycerol phosphate synthase subunit HisF (257 aa).

Residues Asp-11 and Asp-130 contribute to the active site.

Belongs to the HisA/HisF family. Heterodimer of HisH and HisF.

It localises to the cytoplasm. The catalysed reaction is 5-[(5-phospho-1-deoxy-D-ribulos-1-ylimino)methylamino]-1-(5-phospho-beta-D-ribosyl)imidazole-4-carboxamide + L-glutamine = D-erythro-1-(imidazol-4-yl)glycerol 3-phosphate + 5-amino-1-(5-phospho-beta-D-ribosyl)imidazole-4-carboxamide + L-glutamate + H(+). The protein operates within amino-acid biosynthesis; L-histidine biosynthesis; L-histidine from 5-phospho-alpha-D-ribose 1-diphosphate: step 5/9. Functionally, IGPS catalyzes the conversion of PRFAR and glutamine to IGP, AICAR and glutamate. The HisF subunit catalyzes the cyclization activity that produces IGP and AICAR from PRFAR using the ammonia provided by the HisH subunit. The chain is Imidazole glycerol phosphate synthase subunit HisF from Vibrio campbellii (strain ATCC BAA-1116).